We begin with the raw amino-acid sequence, 438 residues long: Protein phosphatase 2C homolog 2 (438 aa).

In terms of domain architecture, PPM-type phosphatase spans 23-294 (IYGVSAMQGW…DNMTMVIIGF (272 aa)). Residues Asp-67, Gly-68, Asp-236, and Asp-285 each coordinate Mn(2+). The disordered stretch occupies residues 370-438 (VLTGSDDTEM…EKTPEESKKD (69 aa)). Acidic residues predominate over residues 375–387 (DDTEMFDNADEDK). Over residues 398–438 (GKTDAKEETEAKPAPEAESSKPADGSEKKQDEKTPEESKKD) the composition is skewed to basic and acidic residues.

It belongs to the PP2C family. The cofactor is Mg(2+). Mn(2+) serves as cofactor.

The protein resides in the cytoplasm. It is found in the nucleus. It carries out the reaction O-phospho-L-seryl-[protein] + H2O = L-seryl-[protein] + phosphate. The enzyme catalyses O-phospho-L-threonyl-[protein] + H2O = L-threonyl-[protein] + phosphate. Its function is as follows. Dephosphorylating regulator for many key proteins. Negatively regulates the endoplasmic reticulum unfolded protein response. This is Protein phosphatase 2C homolog 2 from Hypocrea jecorina (strain QM6a) (Trichoderma reesei).